A 434-amino-acid chain; its full sequence is UPF0597 protein CLD_2616 (434 aa).

It belongs to the UPF0597 family.

The chain is UPF0597 protein CLD_2616 from Clostridium botulinum (strain Okra / Type B1).